An 890-amino-acid polypeptide reads, in one-letter code: Alanine--tRNA ligase (890 aa).

His-564, His-568, Cys-677, and His-681 together coordinate Zn(2+).

The protein belongs to the class-II aminoacyl-tRNA synthetase family. Zn(2+) serves as cofactor.

It localises to the cytoplasm. The catalysed reaction is tRNA(Ala) + L-alanine + ATP = L-alanyl-tRNA(Ala) + AMP + diphosphate. In terms of biological role, catalyzes the attachment of alanine to tRNA(Ala) in a two-step reaction: alanine is first activated by ATP to form Ala-AMP and then transferred to the acceptor end of tRNA(Ala). Also edits incorrectly charged Ser-tRNA(Ala) and Gly-tRNA(Ala) via its editing domain. This chain is Alanine--tRNA ligase, found in Rhodopseudomonas palustris (strain BisB18).